The sequence spans 274 residues: Rhamnulose-1-phosphate aldolase (274 aa).

E117 is an active-site residue. Zn(2+) contacts are provided by H141, H143, and H212.

This sequence belongs to the aldolase class II family. RhaD subfamily. As to quaternary structure, homotetramer. Zn(2+) serves as cofactor.

Its subcellular location is the cytoplasm. The catalysed reaction is L-rhamnulose 1-phosphate = (S)-lactaldehyde + dihydroxyacetone phosphate. Its pathway is carbohydrate degradation; L-rhamnose degradation; glycerone phosphate from L-rhamnose: step 3/3. Functionally, catalyzes the reversible cleavage of L-rhamnulose-1-phosphate to dihydroxyacetone phosphate (DHAP) and L-lactaldehyde. This Escherichia coli O127:H6 (strain E2348/69 / EPEC) protein is Rhamnulose-1-phosphate aldolase.